Here is a 51-residue protein sequence, read N- to C-terminus: Light-harvesting protein B800/850/890 beta-2 chain (51 aa).

Residues 1 to 17 (ADEMRNVSDEEAKEFHA) lie on the Cytoplasmic side of the membrane. The a bacteriochlorophyll site is built by His-16 and His-34. Residues 18–40 (MFSQAFTVYVGVAVVAHILAWAW) form a helical membrane-spanning segment. The Periplasmic portion of the chain corresponds to 41–51 (RPWIPGDEGFG).

This sequence belongs to the antenna complex beta subunit family. In terms of assembly, the core complex is formed by different alpha and beta chains, binding bacteriochlorophyll molecules, and arranged most probably in tetrameric structures disposed around the reaction center. The non-pigmented gamma chains may constitute additional components.

The protein localises to the cell inner membrane. Antenna complexes are light-harvesting systems, which transfer the excitation energy to the reaction centers. The sequence is that of Light-harvesting protein B800/850/890 beta-2 chain from Halorhodospira halophila (strain DSM 244 / SL1) (Ectothiorhodospira halophila (strain DSM 244 / SL1)).